The primary structure comprises 230 residues: Urease accessory protein UreF (230 aa).

Belongs to the UreF family. In terms of assembly, ureD, UreF and UreG form a complex that acts as a GTP-hydrolysis-dependent molecular chaperone, activating the urease apoprotein by helping to assemble the nickel containing metallocenter of UreC. The UreE protein probably delivers the nickel.

Its subcellular location is the cytoplasm. In terms of biological role, required for maturation of urease via the functional incorporation of the urease nickel metallocenter. This is Urease accessory protein UreF from Cupriavidus taiwanensis (strain DSM 17343 / BCRC 17206 / CCUG 44338 / CIP 107171 / LMG 19424 / R1) (Ralstonia taiwanensis (strain LMG 19424)).